Reading from the N-terminus, the 228-residue chain is MDDFLKKDLGCLRSGDLKKCGELICEICRDLYTSGWVTGTGGGITIRSGDAIVIAPSGVQKERMELHHLFVMSLITREYMRMPALRLKPSQCTPLFLAVYTLRDAYACIHTHSQEAILLSTLFADSDHFSATGFEVLSYIPKGSKNNGFHKPTDKIKIPFINNTAHESDLHDSLQEAINLYPDTCAVIVRDHGIYCWGDTWQDTKMNTEAVEFLFQAYLRRRRLQKPE.

Cys-92 lines the substrate pocket. Zn(2+) is bound by residues His-110 and His-112. Residue Glu-135 is the Proton donor/acceptor of the active site. Residue His-192 coordinates Zn(2+).

Belongs to the aldolase class II family. MtnB subfamily. The cofactor is Zn(2+).

The protein localises to the cytoplasm. The protein resides in the nucleus. The enzyme catalyses 5-(methylsulfanyl)-D-ribulose 1-phosphate = 5-methylsulfanyl-2,3-dioxopentyl phosphate + H2O. Its pathway is amino-acid biosynthesis; L-methionine biosynthesis via salvage pathway; L-methionine from S-methyl-5-thio-alpha-D-ribose 1-phosphate: step 2/6. In terms of biological role, catalyzes the dehydration of methylthioribulose-1-phosphate (MTRu-1-P) into 2,3-diketo-5-methylthiopentyl-1-phosphate (DK-MTP-1-P). This chain is Methylthioribulose-1-phosphate dehydratase, found in Schizosaccharomyces pombe (strain 972 / ATCC 24843) (Fission yeast).